The primary structure comprises 437 residues: Tol-Pal system protein TolB (437 aa).

The N-terminal stretch at 1–30 is a signal peptide; the sequence is MLPTPSRSHKLSGYAAVLFFLWLVCSPAQA. The span at 410 to 423 shows a compositional bias: polar residues; that stretch reads SDGRTRQQLSTQTG. Residues 410 to 437 form a disordered region; it reads SDGRTRQQLSTQTGDIREPAWGPLRRLQ.

It belongs to the TolB family. As to quaternary structure, the Tol-Pal system is composed of five core proteins: the inner membrane proteins TolA, TolQ and TolR, the periplasmic protein TolB and the outer membrane protein Pal. They form a network linking the inner and outer membranes and the peptidoglycan layer.

The protein localises to the periplasm. Its function is as follows. Part of the Tol-Pal system, which plays a role in outer membrane invagination during cell division and is important for maintaining outer membrane integrity. The chain is Tol-Pal system protein TolB from Nitrosospira multiformis (strain ATCC 25196 / NCIMB 11849 / C 71).